The following is a 1241-amino-acid chain: eIF-2-alpha kinase GCN2 (1241 aa).

Residues 1–15 (MGRSSSKKKKKRGGS) are compositionally biased toward basic residues. The segment at 1-33 (MGRSSSKKKKKRGGSGRRGQLKDHGSNADEDNE) is disordered. The RWD domain maps to 37 to 148 (EEITALSAIF…EAAQEFLSEI (112 aa)). The segment at 253–321 (PIAKLNTVQE…SLGSWSSDSL (69 aa)) is disordered. Composition is skewed to low complexity over residues 267-276 (DTSISSFDSS) and 307-321 (NSESESLGSWSSDSL). The region spanning 425–731 (FEELKPLGQG…ATELLKHAFP (307 aa)) is the Protein kinase domain. Residues 431–439 (LGQGGFGHV) and Lys454 contribute to the ATP site. The active-site Proton acceptor is the Asp586. Residues 819-1219 (IPMRLLSDCP…ELKKEKVVGR (401 aa)) are histidyl-tRNA synthetase-like.

The protein belongs to the protein kinase superfamily. Ser/Thr protein kinase family. GCN2 subfamily. As to quaternary structure, homodimer; homodimerization is important for kinase activation by uncharged tRNAs. Expressed in roots, leaves, stems, buds, flowers, siliques and seedlings.

It is found in the cytoplasm. The catalysed reaction is L-seryl-[protein] + ATP = O-phospho-L-seryl-[protein] + ADP + H(+). It catalyses the reaction L-threonyl-[protein] + ATP = O-phospho-L-threonyl-[protein] + ADP + H(+). With respect to regulation, the kinase activity is stimulated upon binding to uncharged tRNAs. In terms of biological role, metabolic-stress sensing protein kinase that phosphorylates the alpha subunit of eukaryotic translation initiation factor 2 eIF-2-alpha in response to low amino acid availability. Plays a role as an activator of the general amino acid control pathway required for adapatation to amino acid starvation. Converts phosphorylated eIF-2-alpha either to a competitive inhibitor of translation initiation, leading to a global protein synthesis repression, and thus to a reduced overall utilization of amino acids, or to a translational initiation activation of specific mRNAs, and hence allowing reprogramming of amino acid biosynthetic gene expression to alleviate nutrient depletion. Binds uncharged tRNAs. The protein is eIF-2-alpha kinase GCN2 of Arabidopsis thaliana (Mouse-ear cress).